The sequence spans 196 residues: MSKPDVSKLNRGNIVEFIGGIFDRRGDEEYLGEPVTMAEHMLQGATIAEQNGQPEEIIVGALLHDIGHFTSEFGMFSMDDTEDRYHEEAGAEVLEQFFPSVITDCVRYHVAAKRYLCATKPEYFNRLSEASIHSLKLQGGPMDAEEVAEFEKNPNLKQIIAVRYLDEAGKRADMETPDYWHFAPMVQRMVDKHMGA.

Y30 contacts [(1R)-1-hydroxy-2-(trimethylamino)ethyl]phosphonate. Fe cation-binding residues include Y30, H40, H64, and D65. The HD domain maps to 37 to 156 (MAEHMLQGAT…VAEFEKNPNL (120 aa)). The [(1R)-1-hydroxy-2-(trimethylamino)ethyl]phosphonate site is built by H68, H86, H109, K113, S131, S134, and R163. Fe cation contacts are provided by H86 and H109. D166 lines the Fe cation pocket.

It depends on Fe cation as a cofactor.

The enzyme catalyses [(1R)-1-hydroxy-2-(trimethylamino)ethyl]phosphonate + O2 = glycine betaine + phosphate + 2 H(+). In terms of biological role, involved in the degradation of the naturally occurring organophosphonate 2-(trimethylammonio)ethylphosphonate (TMAEP). Catalyzes the O(2)-dependent cleavage of (R)-1-hydroxy-2-(trimethylammonio)ethylphosphonate (OH-TMAEP) to yield glycine betaine and phosphate. Is highly specific for its N-trimethylated substrate. The sequence is that of [1-hydroxy-2-(trimethylamino)ethyl]phosphonate dioxygenase (glycine-betaine-forming) from Leisingera caerulea (Phaeobacter caeruleus).